The following is a 196-amino-acid chain: GTP cyclohydrolase-2 (196 aa).

49 to 53 (RIHSE) lines the GTP pocket. Residues C54, C65, and C67 each contribute to the Zn(2+) site. GTP contacts are provided by residues Q70, 92 to 94 (EGR), and T114. The active-site Proton acceptor is the D126. R128 serves as the catalytic Nucleophile. Residues T149 and K154 each contribute to the GTP site.

It belongs to the GTP cyclohydrolase II family. As to quaternary structure, homodimer. Zn(2+) is required as a cofactor.

The catalysed reaction is GTP + 4 H2O = 2,5-diamino-6-hydroxy-4-(5-phosphoribosylamino)-pyrimidine + formate + 2 phosphate + 3 H(+). It functions in the pathway cofactor biosynthesis; riboflavin biosynthesis; 5-amino-6-(D-ribitylamino)uracil from GTP: step 1/4. Its function is as follows. Catalyzes the conversion of GTP to 2,5-diamino-6-ribosylamino-4(3H)-pyrimidinone 5'-phosphate (DARP), formate and pyrophosphate. The polypeptide is GTP cyclohydrolase-2 (Hamiltonella defensa subsp. Acyrthosiphon pisum (strain 5AT)).